A 233-amino-acid polypeptide reads, in one-letter code: Proteasome subunit beta type-6 (233 aa).

The propeptide at 1-12 is removed in mature form; that stretch reads MDLNLDAPHSMG. Catalysis depends on T13, which acts as the Nucleophile.

This sequence belongs to the peptidase T1B family. Component of the 20S core complex of the 26S proteasome. The 26S proteasome is composed of a core protease (CP), known as the 20S proteasome, capped at one or both ends by the 19S regulatory particle (RP/PA700). The 20S proteasome core is composed of 28 subunits that are arranged in four stacked rings, resulting in a barrel-shaped structure. The two end rings are each formed by seven alpha subunits, and the two central rings are each formed by seven beta subunits. The catalytic chamber with the active sites is on the inside of the barrel.

It localises to the cytoplasm. Its subcellular location is the nucleus. It carries out the reaction Cleavage of peptide bonds with very broad specificity.. Its function is as follows. The proteasome is a multicatalytic proteinase complex which is characterized by its ability to cleave peptides with Arg, Phe, Tyr, Leu, and Glu adjacent to the leaving group at neutral or slightly basic pH. The proteasome has an ATP-dependent proteolytic activity. This is Proteasome subunit beta type-6 (PBA1) from Arabidopsis thaliana (Mouse-ear cress).